A 105-amino-acid chain; its full sequence is UPF0235 protein A1E_05380 (105 aa).

Belongs to the UPF0235 family.

The chain is UPF0235 protein A1E_05380 from Rickettsia canadensis (strain McKiel).